The primary structure comprises 1228 residues: DNA-directed RNA polymerase subunit beta (1228 aa).

Positions 1175–1204 (ESVDEDEQPQGLGAFEIGGDEIEEDKEDDK) are disordered. A compositionally biased stretch (acidic residues) spans 1192–1202 (GGDEIEEDKED).

It belongs to the RNA polymerase beta chain family. The RNAP catalytic core consists of 2 alpha, 1 beta, 1 beta' and 1 omega subunit. When a sigma factor is associated with the core the holoenzyme is formed, which can initiate transcription.

It carries out the reaction RNA(n) + a ribonucleoside 5'-triphosphate = RNA(n+1) + diphosphate. Its function is as follows. DNA-dependent RNA polymerase catalyzes the transcription of DNA into RNA using the four ribonucleoside triphosphates as substrates. The protein is DNA-directed RNA polymerase subunit beta of Caldicellulosiruptor bescii (strain ATCC BAA-1888 / DSM 6725 / KCTC 15123 / Z-1320) (Anaerocellum thermophilum).